A 130-amino-acid polypeptide reads, in one-letter code: Small ribosomal subunit protein uS9 (130 aa).

This sequence belongs to the universal ribosomal protein uS9 family.

The sequence is that of Small ribosomal subunit protein uS9 from Delftia acidovorans (strain DSM 14801 / SPH-1).